Here is a 526-residue protein sequence, read N- to C-terminus: Major facilitator superfamily domain-containing protein 4A (526 aa).

12 helical membrane-spanning segments follow: residues 21-41 (LTYW…GPTI), 55-75 (ITLV…IGGF), 84-104 (LSSL…IPLC), 107-127 (LLML…IDTI), 142-162 (VFLQ…PLIA), 215-235 (YAFW…FVLV), 297-317 (LSFF…DGIV), 341-361 (GYLT…AIPL), 377-397 (GVIV…FLFI), 401-421 (CLGL…EDIL), 430-450 (VLVT…GSVM), and 458-478 (FLLC…FLYF).

The protein belongs to the major facilitator superfamily.

It localises to the membrane. The polypeptide is Major facilitator superfamily domain-containing protein 4A (mfsd4a) (Danio rerio (Zebrafish)).